The sequence spans 429 residues: Asparagine--tRNA ligase (429 aa).

This sequence belongs to the class-II aminoacyl-tRNA synthetase family.

It localises to the cytoplasm. It carries out the reaction tRNA(Asn) + L-asparagine + ATP = L-asparaginyl-tRNA(Asn) + AMP + diphosphate + H(+). The polypeptide is Asparagine--tRNA ligase (Thermoplasma acidophilum (strain ATCC 25905 / DSM 1728 / JCM 9062 / NBRC 15155 / AMRC-C165)).